The primary structure comprises 464 residues: C-terminal processing peptidase, chloroplastic (464 aa).

The N-terminal 32 residues, 1-32, are a transit peptide targeting the chloroplast; that stretch reads MHSRTNCLQTSVRAPQPHFRPFTAVKTCRQRC. Residues 33-77 constitute a thylakoid transit peptide; the sequence is STTAAAAKRDQAQEQQPWIQVGLGLAAAATAVAVGLGAAALPAQA. The PDZ domain maps to 149–234; sequence LAALRRGTAG…SQVEVVLHAP (86 aa). Catalysis depends on charge relay system residues Ser372 and Lys397.

The protein belongs to the peptidase S41A family. Monomer.

It localises to the plastid. The protein resides in the chloroplast thylakoid lumen. The catalysed reaction is The enzyme shows specific recognition of a C-terminal tripeptide, Xaa-Yaa-Zaa, in which Xaa is preferably Ala or Leu, Yaa is preferably Ala or Tyr, and Zaa is preferably Ala, but then cleaves at a variable distance from the C-terminus. A typical cleavage is -Ala-Ala-|-Arg-Ala-Ala-Lys-Glu-Asn-Tyr-Ala-Leu-Ala-Ala.. Not inhibited by antipain, 4-amidinophenylmethanesulfonyl fluoride, aprotinin, chymostatin, 3,4-dichloroisocoumarin, diisopropyl fluorophosphate, E64, EDTA, EGTA, iodoacetamide, leupeptin, pepstatin, o-phenanthroline, N-ethylmaleimide, phosphoramidon or phenylmethylsulfonyl fluoride. Its function is as follows. Protease involved in the C-terminal processing of the chloroplastic D1 protein of photosystem II. This proteolytic processing is necessary to allow the light-driven assembly of the tetranuclear manganese cluster, which is responsible for photosynthetic water oxidation. This chain is C-terminal processing peptidase, chloroplastic (ctpA), found in Tetradesmus obliquus (Green alga).